The primary structure comprises 312 residues: Ribosomal RNA small subunit methyltransferase H (312 aa).

S-adenosyl-L-methionine is bound by residues 34 to 36 (GGH), D54, F78, D100, and Q107.

Belongs to the methyltransferase superfamily. RsmH family.

The protein localises to the cytoplasm. It catalyses the reaction cytidine(1402) in 16S rRNA + S-adenosyl-L-methionine = N(4)-methylcytidine(1402) in 16S rRNA + S-adenosyl-L-homocysteine + H(+). Functionally, specifically methylates the N4 position of cytidine in position 1402 (C1402) of 16S rRNA. This is Ribosomal RNA small subunit methyltransferase H from Salmonella choleraesuis (strain SC-B67).